We begin with the raw amino-acid sequence, 402 residues long: Flavohemoprotein (402 aa).

The Globin domain occupies 1-136; that stretch reads MLSEKTIEIV…IADAFISIEA (136 aa). His-85 contributes to the heme b binding site. Residues Tyr-95 and Glu-135 each act as charge relay system in the active site. A reductase region spans residues 147–402; sequence GGWKDFRNFV…EFFGPAASLQ (256 aa). The FAD-binding FR-type domain maps to 150–260; that stretch reads KDFRNFVVVK…SAPAGDFVLN (111 aa). Residues Tyr-188 and 204 to 207 contribute to the FAD site; that span reads RQYS. Position 273–278 (273–278) interacts with NADP(+); it reads GVGITP. Residue 394–397 participates in FAD binding; the sequence is FFGP.

Belongs to the globin family. Two-domain flavohemoproteins subfamily. The protein in the C-terminal section; belongs to the flavoprotein pyridine nucleotide cytochrome reductase family. Heme b serves as cofactor. Requires FAD as cofactor.

It catalyses the reaction 2 nitric oxide + NADPH + 2 O2 = 2 nitrate + NADP(+) + H(+). The catalysed reaction is 2 nitric oxide + NADH + 2 O2 = 2 nitrate + NAD(+) + H(+). Functionally, is involved in NO detoxification in an aerobic process, termed nitric oxide dioxygenase (NOD) reaction that utilizes O(2) and NAD(P)H to convert NO to nitrate, which protects the bacterium from various noxious nitrogen compounds. Therefore, plays a central role in the inducible response to nitrosative stress. This is Flavohemoprotein from Bacillus anthracis.